We begin with the raw amino-acid sequence, 109 residues long: Large ribosomal subunit protein uL22 (109 aa).

This sequence belongs to the universal ribosomal protein uL22 family. As to quaternary structure, part of the 50S ribosomal subunit.

This protein binds specifically to 23S rRNA; its binding is stimulated by other ribosomal proteins, e.g. L4, L17, and L20. It is important during the early stages of 50S assembly. It makes multiple contacts with different domains of the 23S rRNA in the assembled 50S subunit and ribosome. Its function is as follows. The globular domain of the protein is located near the polypeptide exit tunnel on the outside of the subunit, while an extended beta-hairpin is found that lines the wall of the exit tunnel in the center of the 70S ribosome. The protein is Large ribosomal subunit protein uL22 of Azoarcus sp. (strain BH72).